A 534-amino-acid polypeptide reads, in one-letter code: CTP synthase (534 aa).

The segment at 1 to 267 (MTKYIFVTGG…DQIVCDHLKL (267 aa)) is amidoligase domain. A CTP-binding site is contributed by S13. UTP is bound at residue S13. Position 14-19 (14-19 (SIGKGI)) interacts with ATP. Y54 is a binding site for L-glutamine. Residue D71 participates in ATP binding. Positions 71 and 141 each coordinate Mg(2+). CTP contacts are provided by residues 148-150 (DIE), 188-193 (KTKPTQ), and K224. Residues 188-193 (KTKPTQ) and K224 contribute to the UTP site. 240–242 (RNV) contributes to the ATP binding site. The Glutamine amidotransferase type-1 domain maps to 292–534 (KIALVGKYVE…FVTAAIKNSN (243 aa)). An L-glutamine-binding site is contributed by G354. C381 functions as the Nucleophile; for glutamine hydrolysis in the catalytic mechanism. Residues 382–385 (LGMQ), E405, and R463 each bind L-glutamine. Active-site residues include H508 and E510.

Belongs to the CTP synthase family. Homotetramer.

The catalysed reaction is UTP + L-glutamine + ATP + H2O = CTP + L-glutamate + ADP + phosphate + 2 H(+). The enzyme catalyses L-glutamine + H2O = L-glutamate + NH4(+). It carries out the reaction UTP + NH4(+) + ATP = CTP + ADP + phosphate + 2 H(+). The protein operates within pyrimidine metabolism; CTP biosynthesis via de novo pathway; CTP from UDP: step 2/2. With respect to regulation, allosterically activated by GTP, when glutamine is the substrate; GTP has no effect on the reaction when ammonia is the substrate. The allosteric effector GTP functions by stabilizing the protein conformation that binds the tetrahedral intermediate(s) formed during glutamine hydrolysis. Inhibited by the product CTP, via allosteric rather than competitive inhibition. Catalyzes the ATP-dependent amination of UTP to CTP with either L-glutamine or ammonia as the source of nitrogen. Regulates intracellular CTP levels through interactions with the four ribonucleotide triphosphates. The sequence is that of CTP synthase from Streptococcus pyogenes serotype M28 (strain MGAS6180).